Reading from the N-terminus, the 382-residue chain is Serine protease 23 (382 aa).

The N-terminal stretch at M1–P22 is a signal peptide. The N-linked (GlcNAc...) asparagine glycan is linked to N92. A disulfide bridge links C159 with C175. H174 acts as the Charge relay system in catalysis. An N-linked (GlcNAc...) asparagine glycan is attached at N206. Catalysis depends on charge relay system residues D239 and S315.

It belongs to the peptidase S1 family.

The protein localises to the secreted. The polypeptide is Serine protease 23 (Prss23) (Mus musculus (Mouse)).